Consider the following 309-residue polypeptide: Peptide methionine sulfoxide reductase MsrA/MsrB (309 aa).

The interval methionine 1 to asparagine 153 is peptide methionine sulfoxide reductase A. Cysteine 8 is a catalytic residue. One can recognise a MsrB domain in the interval alanine 170–lysine 293. The active-site Nucleophile is the cysteine 282.

In the N-terminal section; belongs to the MsrA Met sulfoxide reductase family. It in the C-terminal section; belongs to the MsrB Met sulfoxide reductase family.

The enzyme catalyses L-methionyl-[protein] + [thioredoxin]-disulfide + H2O = L-methionyl-(S)-S-oxide-[protein] + [thioredoxin]-dithiol. It catalyses the reaction [thioredoxin]-disulfide + L-methionine + H2O = L-methionine (S)-S-oxide + [thioredoxin]-dithiol. It carries out the reaction L-methionyl-[protein] + [thioredoxin]-disulfide + H2O = L-methionyl-(R)-S-oxide-[protein] + [thioredoxin]-dithiol. In terms of biological role, has an important function as a repair enzyme for proteins that have been inactivated by oxidation. Catalyzes the reversible oxidation-reduction of methionine sulfoxide in proteins to methionine. This chain is Peptide methionine sulfoxide reductase MsrA/MsrB (msrAB), found in Streptococcus pyogenes serotype M3 (strain ATCC BAA-595 / MGAS315).